A 275-amino-acid chain; its full sequence is 3-methyl-2-oxobutanoate hydroxymethyltransferase (275 aa).

2 residues coordinate Mg(2+): aspartate 51 and aspartate 90. Residues 51–52 (DS), aspartate 90, and lysine 120 each bind 3-methyl-2-oxobutanoate. A Mg(2+)-binding site is contributed by glutamate 122. Glutamate 189 serves as the catalytic Proton acceptor.

Belongs to the PanB family. Homodecamer; pentamer of dimers. Requires Mg(2+) as cofactor.

The protein resides in the cytoplasm. It catalyses the reaction 3-methyl-2-oxobutanoate + (6R)-5,10-methylene-5,6,7,8-tetrahydrofolate + H2O = 2-dehydropantoate + (6S)-5,6,7,8-tetrahydrofolate. It participates in cofactor biosynthesis; (R)-pantothenate biosynthesis; (R)-pantoate from 3-methyl-2-oxobutanoate: step 1/2. Catalyzes the reversible reaction in which hydroxymethyl group from 5,10-methylenetetrahydrofolate is transferred onto alpha-ketoisovalerate to form ketopantoate. This chain is 3-methyl-2-oxobutanoate hydroxymethyltransferase, found in Caulobacter vibrioides (strain ATCC 19089 / CIP 103742 / CB 15) (Caulobacter crescentus).